Consider the following 384-residue polypeptide: DNA dC-&gt;dU-editing enzyme APOBEC-3G (384 aa).

The tract at residues 1 to 60 (MKPHFRNTVERMYRDTFSYNFYNRPILSRRNTVWLCYEVKTKGPSRPPLDAKIFRGQVYS) is essential for cytoplasmic localization. A CMP/dCMP-type deaminase 1 domain is found at 29-138 (RRNTVWLCYE…PDYQEALRSL (110 aa)). Thr32 carries the phosphothreonine; by PKA modification. (Microbial infection) Glycyl lysine isopeptide (Lys-Gly) (interchain with G-Cter in ubiquitin) cross-links involve residues Lys42, Lys52, and Lys63. His65, Cys97, and Cys100 together coordinate Zn(2+). (Microbial infection) Glycyl lysine isopeptide (Lys-Gly) (interchain with G-Cter in ubiquitin) cross-links involve residues Lys150 and Lys163. Residues 209 to 336 (EPWVRGRHET…TLAEAGAKIS (128 aa)) are necessary for homooligomerization. Residues 213–215 (RGR) form an interaction with DNA region. One can recognise a CMP/dCMP-type deaminase 2 domain in the interval 214–328 (GRHETYLCYE…GRCQEGLRTL (115 aa)). A Phosphothreonine; by PKA and CAMK2 modification is found at Thr218. Residue Lys249 forms a (Microbial infection) Glycyl lysine isopeptide (Lys-Gly) (interchain with G-Cter in ubiquitin) linkage. Residue His257 participates in Zn(2+) binding. The active-site Proton donor is the Glu259. Lys270 is covalently cross-linked ((Microbial infection) Glycyl lysine isopeptide (Lys-Gly) (interchain with G-Cter in ubiquitin)). Residues Cys288 and Cys291 each contribute to the Zn(2+) site. (Microbial infection) Glycyl lysine isopeptide (Lys-Gly) (interchain with G-Cter in ubiquitin) cross-links involve residues Lys297, Lys301, and Lys303. Positions 313 to 320 (RIYDDQGR) are interaction with DNA. Residue Lys334 forms a (Microbial infection) Glycyl lysine isopeptide (Lys-Gly) (interchain with G-Cter in ubiquitin) linkage.

The protein belongs to the cytidine and deoxycytidylate deaminase family. As to quaternary structure, homodimer. Homooligomer. Can bind RNA to form ribonucleoprotein complexes of high-molecular-mass (HMM) or low-molecular-mass (LMM). HMM is inactive and heterogeneous in protein composition because of binding nonselectively to cellular RNAs, which in turn are associated with variety of cellular proteins. The LMM form which is enzymatically active has few or no RNAs associated. Its ability to form homooligomer is distinct from its ability to assemble into HMM. Interacts with APOBEC3B, APOBEC3F, MOV10, AGO2, EIF4E, EIF4ENIF1, DCP2 and DDX6 in an RNA-dependent manner. Interacts with AGO1, AGO3 and PKA/PRKACA. In terms of assembly, (Microbial infection) Interacts with HIV-1 Vif; promoting its ubiquitination by a cullin-5-RING E3 ubiquitin-protein ligase complex (ECS complex) hijacked by the HIV-1 Vif. (Microbial infection) Interacts with HIV-1 reverse transcriptase/ribonuclease H. As to quaternary structure, (Microbial infection) Interacts with hepatitis B virus capsid protein. The cofactor is Zn(2+). Post-translationally, (Microbial infection) Following infection by HIV-1, ubiquitinated by a cullin-5-RING E3 ubiquitin-protein ligase complex (ECS complex) hijacked by the HIV-1 Vif protein, leading to its degradation. Deubiquitinated by USP49; leading to stabilization. Phosphorylation at Thr-32 reduces its binding to HIV-1 Vif and subsequent ubiquitination and degradation thus promoting its antiviral activity. Expressed in spleen, testes, ovary and peripheral blood leukocytes and CD4+ lymphocytes. Also expressed in non-permissive peripheral blood mononuclear cells, and several tumor cell lines; no expression detected in permissive lymphoid and non-lymphoid cell lines. Exists only in the LMM form in peripheral blood-derived resting CD4 T-cells and monocytes, both of which are refractory to HIV-1 infection. LMM is converted to a HMM complex when resting CD4 T-cells are activated or when monocytes are induced to differentiate into macrophages. This change correlates with increased susceptibility of these cells to HIV-1 infection.

It is found in the cytoplasm. It localises to the nucleus. The protein resides in the P-body. It carries out the reaction a 2'-deoxycytidine in single-stranded DNA + H2O + H(+) = a 2'-deoxyuridine in single-stranded DNA + NH4(+). Its activity is regulated as follows. (Microbial infection) Antiviral activity is neutralized by the HIV-1 virion infectivity factor (Vif), that prevents its incorporation into progeny virions by both inhibiting its translation and/or by inducing its ubiquitination and subsequent degradation by the 26S proteasome. Can also be neutralized by simian immunodeficiency virus sooty mangabey monkey virus (SIV-sm) and chimpanzee immunodeficiency virus (SIV-cpz) Vif. In terms of biological role, DNA deaminase (cytidine deaminase) which acts as an inhibitor of retrovirus replication and retrotransposon mobility via deaminase-dependent and -independent mechanisms. Exhibits potent antiviral activity against Vif-deficient HIV-1. After the penetration of retroviral nucleocapsids into target cells of infection and the initiation of reverse transcription, it can induce the conversion of cytosine to uracil in the minus-sense single-strand viral DNA, leading to G-to-A hypermutations in the subsequent plus-strand viral DNA. The resultant detrimental levels of mutations in the proviral genome, along with a deamination-independent mechanism that works prior to the proviral integration, together exert efficient antiretroviral effects in infected target cells. Selectively targets single-stranded DNA and does not deaminate double-stranded DNA or single- or double-stranded RNA. Exhibits antiviral activity also against simian immunodeficiency viruses (SIVs), hepatitis B virus (HBV), equine infectious anemia virus (EIAV), xenotropic MuLV-related virus (XMRV) and simian foamy virus (SFV). May inhibit the mobility of LTR and non-LTR retrotransposons. The chain is DNA dC-&gt;dU-editing enzyme APOBEC-3G from Homo sapiens (Human).